We begin with the raw amino-acid sequence, 526 residues long: Probable carboxypeptidase 2 (526 aa).

The N-terminal stretch at 1-21 (MVAYRLLALISLGLGSHCASA) is a signal peptide. Asn46 carries N-linked (GlcNAc...) asparagine glycosylation. The disordered stretch occupies residues 53–76 (PAFTSPGTVPRGFSDGTSGPTRDE). The region spanning 71–351 (GPTRDETMEG…VMAKSILQTA (281 aa)) is the Peptidase M14 domain. A glycan (N-linked (GlcNAc...) asparagine) is linked at Asn116. 3 residues coordinate Zn(2+): His136, Glu139, and His224. Glu322 acts as the Proton donor/acceptor in catalysis. Residues Asn393 and Asn459 are each glycosylated (N-linked (GlcNAc...) asparagine).

It belongs to the peptidase M14 family. Zn(2+) serves as cofactor.

It is found in the secreted. Functionally, extracellular metalloprotease that contributes to pathogenicity. The protein is Probable carboxypeptidase 2 (MCPB) of Arthroderma benhamiae (strain ATCC MYA-4681 / CBS 112371) (Trichophyton mentagrophytes).